The chain runs to 555 residues: Tetracycline 7-halogenase (555 aa).

G22–G27 is an FAD binding site.

This sequence belongs to the flavin-dependent halogenase family. Bacterial tryptophan halogenase subfamily. As to quaternary structure, homodimer.

It catalyses the reaction tetracycline + FADH2 + chloride + O2 = 7-chlorotetracycline + FAD + 2 H2O + H(+). It participates in antibiotic biosynthesis. Involved in the biosynthesis of chlorotetracycline (CTC), an important member from antibiotics tetracycline (TC) family, which inhibits protein synthesis in bacteria and is widely involved in clinical therapy, animal feeds and aquaculture. Utilizes FADH(2) supplied by the flavin reductase CtcQ, to catalyze the chlorination of tetracycline (TC) at C7 position, leading to the production of 7-chlorotetracycline. The enzyme forms a lysine chloramine intermediate on an internal lysine residue before transferring the chlorine to the substrate. It is stereo-selective for the 4S (natural) isomer of tetracycline. The chain is Tetracycline 7-halogenase from Kitasatospora aureofaciens (Streptomyces aureofaciens).